The sequence spans 341 residues: Tryptophan--tRNA ligase (341 aa).

ATP contacts are provided by residues 11-13 and 19-20; these read RPT and GH. A 'HIGH' region motif is present at residues 12–20; sequence PTGKLHIGH. Asp140 provides a ligand contact to L-tryptophan. ATP is bound by residues 152 to 154, Leu194, and 202 to 206; these read GND and KMSKS. Residues 202–206 carry the 'KMSKS' region motif; sequence KMSKS.

The protein belongs to the class-I aminoacyl-tRNA synthetase family. Homodimer.

It localises to the cytoplasm. It carries out the reaction tRNA(Trp) + L-tryptophan + ATP = L-tryptophyl-tRNA(Trp) + AMP + diphosphate + H(+). Functionally, catalyzes the attachment of tryptophan to tRNA(Trp). The chain is Tryptophan--tRNA ligase from Lactococcus lactis subsp. lactis (strain IL1403) (Streptococcus lactis).